Consider the following 146-residue polypeptide: Protein US8.5 (146 aa).

The disordered stretch occupies residues 63–93; it reads LIAIADARGDPPETLPPGAGGAAPACRRPPR. The span at 84–93 shows a compositional bias: low complexity; the sequence is AAPACRRPPR.

The protein belongs to the HHV-1 US8.5 protein family. In terms of processing, phosphorylated.

The protein localises to the host nucleus. It is found in the host nucleolus. The sequence is that of Protein US8.5 from Human herpesvirus 2 (strain HG52) (HHV-2).